Consider the following 498-residue polypeptide: 3-octaprenyl-4-hydroxybenzoate carboxy-lyase (498 aa).

N175 contributes to the Mn(2+) binding site. Prenylated FMN contacts are provided by residues 178-180 (IYR), 192-194 (RWL), and 197-198 (RG). E241 provides a ligand contact to Mn(2+). Residue D290 is the Proton donor of the active site.

Belongs to the UbiD family. In terms of assembly, homohexamer. Prenylated FMN serves as cofactor. The cofactor is Mn(2+).

Its subcellular location is the cell membrane. It carries out the reaction a 4-hydroxy-3-(all-trans-polyprenyl)benzoate + H(+) = a 2-(all-trans-polyprenyl)phenol + CO2. The protein operates within cofactor biosynthesis; ubiquinone biosynthesis. In terms of biological role, catalyzes the decarboxylation of 3-octaprenyl-4-hydroxy benzoate to 2-octaprenylphenol, an intermediate step in ubiquinone biosynthesis. In Yersinia pestis bv. Antiqua (strain Antiqua), this protein is 3-octaprenyl-4-hydroxybenzoate carboxy-lyase.